Reading from the N-terminus, the 593-residue chain is ABC1 family protein lscO (593 aa).

Disordered regions lie at residues 1–29 and 441–467; these read MDVA…GGKK and PYKN…EERK. 2 stretches are compositionally biased toward basic and acidic residues: residues 8 to 22 and 457 to 467; these read MERH…DDGT and QRTKETPEERK.

It belongs to the protein kinase superfamily. ADCK protein kinase family.

Functionally, ABC1 family protein; part of the gene cluster that mediates the biosynthesis of the lipopeptide antibiotics leucinostatins that show extensive biological activities, including antimalarial, antiviral, antibacterial, antifungal, and antitumor activities, as well as phytotoxic. The function of lcsO within the leucinostatins biosynthesis has not been identified yet. This chain is ABC1 family protein lscO, found in Purpureocillium lilacinum (Paecilomyces lilacinus).